Consider the following 80-residue polypeptide: RNA-binding protein Hfq (80 aa).

In terms of domain architecture, Sm spans 10–70 (DIFLNQVRKE…ISTISPMKSV (61 aa)).

This sequence belongs to the Hfq family. Homohexamer.

Its function is as follows. RNA chaperone that binds small regulatory RNA (sRNAs) and mRNAs to facilitate mRNA translational regulation in response to envelope stress, environmental stress and changes in metabolite concentrations. Also binds with high specificity to tRNAs. The chain is RNA-binding protein Hfq from Ruminiclostridium cellulolyticum (strain ATCC 35319 / DSM 5812 / JCM 6584 / H10) (Clostridium cellulolyticum).